We begin with the raw amino-acid sequence, 264 residues long: Non-homologous end-joining factor xrc4 (264 aa).

Over residues Arg173–Tyr186 the composition is skewed to basic and acidic residues. The segment at Arg173 to Glu264 is disordered. A compositionally biased stretch (polar residues) spans Gln200–Ser209. Residues Asp248 to Glu264 are compositionally biased toward basic and acidic residues.

The protein belongs to the XRCC4-XLF family. XRCC4 subfamily. Interacts with lig4; the interaction is direct.

Its subcellular location is the nucleus. Functionally, involved in double-strand break repair via non-homologous end joining (NHEJ); the repair of a double-strand break in DNA in which the two broken ends are rejoined with little or no sequence complementarity. The chain is Non-homologous end-joining factor xrc4 from Schizosaccharomyces pombe (strain 972 / ATCC 24843) (Fission yeast).